The primary structure comprises 334 residues: MKTKQDPRDQKNYDSLQSNLFRLIPPTTHKISLARPNGFLRGLADLVGKYSVDGAEESLFQPGAWDAPYVQPAFFDFLVHAKTISKHEPVGVPLFCFKNNSTAPSIDVLFTPISFHAAVGLPADVDPNVHRVAHIWYGDDSEVSSLMEDLNILLEESNLHTRLHPVGILVENNDSSFLNRVTALTHGPAYMSRKQAALKLVIPTDLFVDLDARLNVEAYGAQPSGGTSTVFCTLVYTRCGNDIKPALTFFKSNKSDFDVLTLIRAYYADLITNKLEVNQQCNINGLKFGVMCTVGYTDSSHSINQQSLCIRGSSLLVTSISNFFVNYTGWRVFA.

It belongs to the herpesviridae TRX1 protein family. As to quaternary structure, interacts with TRX2, MCP and capsid vertex component 2/CVC2.

The protein localises to the virion. Its subcellular location is the host nucleus. Structural component of the T=16 icosahedral capsid. The capsid is composed of pentamers and hexamers of major capsid protein/MCP, which are linked together by heterotrimers called triplexes. These triplexes are formed by a single molecule of triplex protein 1/TRX1 and two copies of triplex protein 2/TRX2. Additionally, TRX1 is required for efficient transport of TRX2 to the nucleus, which is the site of capsid assembly. The chain is Triplex capsid protein 1 from Connochaetes taurinus (Blue wildebeest).